Consider the following 217-residue polypeptide: Glycine betaine/carnitine/choline transport system permease protein OpuCB (217 aa).

The ABC transmembrane type-1 domain maps to T19–L198. The next 6 helical transmembrane spans lie at L23–A43, G52–I74, A84–Y101, L128–Y148, I150–I170, and I180–V200.

The protein belongs to the binding-protein-dependent transport system permease family. CysTW subfamily. As to quaternary structure, the complex is composed of two ATP-binding proteins (OpuCA), two transmembrane proteins (OpuCB and OpuCD) and a solute-binding protein (OpuCC).

The protein resides in the cell membrane. Functionally, involved in a high affinity multicomponent binding-protein-dependent transport system for glycine betaine, carnitine and choline; probably responsible for the translocation of the substrate across the membrane. This is Glycine betaine/carnitine/choline transport system permease protein OpuCB (opuCB) from Bacillus subtilis (strain 168).